A 35-amino-acid polypeptide reads, in one-letter code: uncharacterized protein (35 aa).

Residues 1–27 show a composition bias toward low complexity; it reads MDQNEANIYNENNENNENNENENCQNE. The interval 1–35 is disordered; it reads MDQNEANIYNENNENNENNENENCQNEPIRIKIII.

This is an uncharacterized protein from Dictyostelium discoideum (Social amoeba).